The primary structure comprises 205 residues: Protein TON_1965 (205 aa).

Positions 7–201 constitute an AMMECR1 domain; it reads EWGEFLVRLA…EEYPKGPVKR (195 aa).

This is Protein TON_1965 from Thermococcus onnurineus (strain NA1).